We begin with the raw amino-acid sequence, 426 residues long: Pannexin-1 (426 aa).

Residues 1-40 (MAIAHLATEYVFSDFLLKEPTEPKFKGLRLELAVDKMVTC) lie on the Cytoplasmic side of the membrane. Cysteine 40 carries the post-translational modification S-nitrosocysteine. A helical transmembrane segment spans residues 41–61 (IAVGLPLLLISLAFAQEISIG). Over 62–106 (TQISCFSPSSFSWRQAAFVDSYCWAAVQQKSSLQSESGNLPLWLH) the chain is Extracellular. 2 cysteine pairs are disulfide-bonded: cysteine 66–cysteine 264 and cysteine 84–cysteine 245. Residues 107–127 (KFFPYILLLFAILLYLPALFW) traverse the membrane as a helical segment. Over 128-216 (RFSAAPHLCS…HLIMKYISCR (89 aa)) the chain is Cytoplasmic. Residue tyrosine 198 is modified to Phosphotyrosine. Residues 217–237 (LVTFVVILLACIYLSYYFSLS) form a helical membrane-spanning segment. Topologically, residues 238–277 (SLSDEFLCSIKSGVLKNDSTIPDRFQCKLIAVGIFQLLSL) are extracellular. An N-linked (GlcNAc...) asparagine glycan is attached at asparagine 254. Residues 278 to 298 (INLIVYALLIPVVVYTFFIPF) form a helical membrane-spanning segment. Residues 299 to 426 (RQKTDILKVY…SRQRLLNPSC (128 aa)) are Cytoplasmic-facing. An S-nitrosocysteine modification is found at cysteine 346.

The protein belongs to the pannexin family. As to quaternary structure, homoheptameric. In terms of processing, S-nitrosylation inhibits channel currents and ATP release. Post-translationally, N-glycosylation may play a role in cell surface targeting. Exists in three glycosylation states: non-glycosylated (GLY0), high-mannose glycosylated (GLY1), and fully mature glycosylated (GLY2). Phosphorylated at Tyr-198 by SRC. Phosphorylation activates ATP release. Constitutively phosphorylated in vascular smooth muscle cells. In terms of processing, cleaved by CASP3 and CASP7 during apoptosis. Cleavage opens the channel for the release of metabolites and induces plasma membrane permeability during apoptosis. Widely expressed, including in cartilage, skin, spleen and brain.

The protein localises to the cell membrane. It localises to the endoplasmic reticulum membrane. The enzyme catalyses chloride(in) = chloride(out). It catalyses the reaction iodide(out) = iodide(in). The catalysed reaction is Ca(2+)(in) = Ca(2+)(out). It carries out the reaction ATP(in) = ATP(out). The enzyme catalyses K(+)(in) = K(+)(out). It catalyses the reaction Na(+)(in) = Na(+)(out). The catalysed reaction is nitrate(in) = nitrate(out). It carries out the reaction L-aspartate(out) = L-aspartate(in). The enzyme catalyses L-glutamate(out) = L-glutamate(in). It catalyses the reaction D-gluconate(in) = D-gluconate(out). The catalysed reaction is spermidine(in) = spermidine(out). Functionally, ion channel involved in a variety of physiological functions such as blood pressure regulation, apoptotic cell clearance and oogenesis. Forms anion-selective channels with relatively low conductance and an order of permeabilities: nitrate&gt;iodide&gt;chlroride&gt;&gt;aspartate=glutamate=gluconate. Can release ATP upon activation through phosphorylation or cleavage at C-terminus. May play a role as a Ca(2+)-leak channel to regulate ER Ca(2+) homeostasis. Its function is as follows. During apoptosis and after cleavage by caspases of the C-terminal tail, acts as a plasma membrane channel which mediates the regulated release of find-me signals, such as nucleotides ATP and UTP, and selective plasme membrane permeability. This Mus musculus (Mouse) protein is Pannexin-1.